Consider the following 430-residue polypeptide: Signal recognition particle protein (430 aa).

GTP-binding positions include 105–112 (GLQGSGKT), 187–191 (DTAGR), and 245–248 (TKLD).

It belongs to the GTP-binding SRP family. SRP54 subfamily. As to quaternary structure, part of the signal recognition particle protein translocation system, which is composed of SRP and FtsY.

It is found in the cytoplasm. It carries out the reaction GTP + H2O = GDP + phosphate + H(+). Involved in targeting and insertion of nascent membrane proteins into the cytoplasmic membrane. Binds to the hydrophobic signal sequence of the ribosome-nascent chain (RNC) as it emerges from the ribosomes. The SRP-RNC complex is then targeted to the cytoplasmic membrane where it interacts with the SRP receptor FtsY. The chain is Signal recognition particle protein from Thermus aquaticus.